Reading from the N-terminus, the 487-residue chain is MVNTQNQISQTSELDYIVNQPYKYGFKTSVESEQFPRGISEDIVRLISKKKDEPEYLLNFRLKAYKKWKKMSSPSWAHIKHPNIDFNTIIYYAVPKLKKELKSLDEVDPEILDTFNKLGISLNEQKRISNVAVDAVFDSVSIATTFKKELSEAGVIFCSISEAIRDYPELIKKYLGTVVPAGDNYFAALNSAVFSDGSFCYIPPNTVCPLELSTYFRINNEESGQFERTLIIADRGSKVSYLEGCTAPQFDTNQLHAAIVELVALEGAEIKYSTVQNWYAGNKEGKGGIYNFVTKRGLCSGNNSKISWTQVETGSAITWKYPSCILAGENSQGEFYSVALTNNYQEADTGTKMIHIGNNTKSRIISKGISAGRSKNSYRGLVKVGPQSFNSRNYSQCDSLLIGQSSQANTFPYIQVQNPTSKVEHEASTSKISEDQIFYFLQRGINLEESIALMISGFCKDVFNELPMEFATEADRLLSLKLEGTVG.

It belongs to the iron-sulfur cluster assembly SufBD family.

It localises to the plastid. Its subcellular location is the chloroplast. In Pyropia yezoensis (Susabi-nori), this protein is Iron-sulfur cluster assembly SufBD family protein ycf24 (ycf24).